We begin with the raw amino-acid sequence, 1170 residues long: Cellulose synthase-like protein D2 (1170 aa).

Disordered stretches follow at residues 1–75 and 269–295; these read MASN…PESG and NEVDNGGGGGGGGGLGGGDGQPAEFTS. Residues 10-24 are compositionally biased toward low complexity; that stretch reads RHSNSSRLSRMSYSG. Residues 273–288 show a composition bias toward gly residues; the sequence is NGGGGGGGGGLGGGDG. Transmembrane regions (helical) follow at residues 311–331 and 341–361; these read VLSPYRLLILIRMAVLGLFLA and AMWLWGMSVVCELWFGLSWLL. The active site involves aspartate 441. Residues 527 to 551 adopt a coiled-coil conformation; the sequence is HAREEIKAMKRQREAALDDVVEAVK. Aspartate 873 is a catalytic residue. 6 consecutive transmembrane segments (helical) span residues 955–975, 981–1001, 1027–1047, 1070–1090, 1104–1124, and 1134–1154; these read IFLIVYCFLPALSLFSGQFIV, TFLTYLLVITLTMCMLAVLEI, LAAVLQGLLKVIAGIEISFTL, SLMIPPIVIMMVNLIAIAVGF, LLGGVFFSFWVLAHLYPFAKG, and TIVFVWSGLLAITISLLWVAI.

It belongs to the glycosyltransferase 2 family. Plant cellulose synthase-like D subfamily.

The protein resides in the golgi apparatus membrane. Functionally, thought to be a Golgi-localized beta-glycan synthase that polymerize the backbones of noncellulosic polysaccharides (hemicelluloses) of plant cell wall. The protein is Cellulose synthase-like protein D2 (CSLD2) of Oryza sativa subsp. indica (Rice).